The following is a 366-amino-acid chain: Chorismate synthase (366 aa).

NADP(+) contacts are provided by Arg-48 and Arg-54. FMN is bound by residues 125 to 127 (RSS), 238 to 239 (NA), Gly-278, 293 to 297 (KPTSS), and Arg-319.

This sequence belongs to the chorismate synthase family. Homotetramer. It depends on FMNH2 as a cofactor.

It carries out the reaction 5-O-(1-carboxyvinyl)-3-phosphoshikimate = chorismate + phosphate. The protein operates within metabolic intermediate biosynthesis; chorismate biosynthesis; chorismate from D-erythrose 4-phosphate and phosphoenolpyruvate: step 7/7. Its function is as follows. Catalyzes the anti-1,4-elimination of the C-3 phosphate and the C-6 proR hydrogen from 5-enolpyruvylshikimate-3-phosphate (EPSP) to yield chorismate, which is the branch point compound that serves as the starting substrate for the three terminal pathways of aromatic amino acid biosynthesis. This reaction introduces a second double bond into the aromatic ring system. This chain is Chorismate synthase, found in Dechloromonas aromatica (strain RCB).